Reading from the N-terminus, the 562-residue chain is Tissue-type plasminogen activator (562 aa).

The signal sequence occupies residues 1–22 (MDAMKRGLCCVLLLCGAVFVSP). Residues 23–32 (SQEIHARFRR) constitute a propeptide that is removed on maturation. Residues 33-35 (GAR) constitute a propeptide, removed by plasmin. The Fibronectin type-I domain occupies 39-81 (VICRDEKTQMIYQQHQSWLRPVLRSNRVEYCWCNSGRAQCHSV). Intrachain disulfides connect Cys41–Cys71, Cys69–Cys78, Cys86–Cys97, Cys91–Cys108, Cys110–Cys119, Cys127–Cys208, Cys148–Cys190, Cys179–Cys203, Cys215–Cys296, Cys236–Cys278, Cys267–Cys291, Cys299–Cys430, Cys342–Cys358, Cys350–Cys419, Cys444–Cys519, Cys476–Cys492, and Cys509–Cys537. An important for binding to annexin A2 region spans residues 42 to 52 (RDEKTQMIYQQ). The 39-residue stretch at 82–120 (PVKSCSEPRCFNGGTCQQALYFSDFVCQCPEGFAGKCCE) folds into the EGF-like domain. Thr96 carries O-linked (Fuc) threonine glycosylation. Kringle domains are found at residues 127–208 (CYED…TPAC) and 215–296 (CYFG…VPSC). Asn152 is a glycosylation site (N-linked (GlcNAc...) asparagine). An N-linked (GlcNAc...) asparagine; partial glycan is attached at Asn219. Residues 311–561 (IKGGLFADIA…YLDWIRDNMR (251 aa)) form the Peptidase S1 domain. Catalysis depends on charge relay system residues His357 and Asp406. A glycan (N-linked (GlcNAc...) asparagine) is linked at Asn483. Catalysis depends on Ser513, which acts as the Charge relay system.

Belongs to the peptidase S1 family. In terms of assembly, heterodimer of chain A and chain B held by a disulfide bond. Forms a heterodimer with SERPINA5. Binds to fibrin with high affinity. This interaction leads to an increase in the catalytic efficiency of the enzyme between 100-fold and 1000-fold, due to an increase in affinity for plasminogen. Similarly, binding to heparin increases the activation of plasminogen. Binds to annexin A2, cytokeratin-8, fibronectin and laminin. Binds to mannose receptor and the low-density lipoprotein receptor-related protein (LRP1); these proteins are involved in TPA clearance. Yet unidentified interactions on endothelial cells and vascular smooth muscle cells (VSMC) lead to a 100-fold stimulation of plasminogen activation. In addition, binding to VSMC reduces TPA inhibition by PAI-1 by 30-fold. Binds LRP1B; binding is followed by internalization and degradation. Interacts with SERPINE1. In complex with SERPINE1, interacts with SORL1. Interacts with apyrase from Anopheles gambiae saliva; the interaction results in PLAT activation probably via an allosteric activation mechanism. The single chain, almost fully active enzyme, can be further processed into a two-chain fully active form by a cleavage after Arg-310 catalyzed by plasmin, tissue kallikrein or factor Xa. Post-translationally, differential cell-specific N-linked glycosylation gives rise to two glycoforms, type I (glycosylated at Asn-219) and type II (not glycosylated at Asn-219). The single chain type I glycoform is less readily converted into the two-chain form by plasmin, and the two-chain type I glycoform has a lower activity than the two-chain type II glycoform in the presence of fibrin. In terms of processing, N-glycosylation of Asn-152; the bound oligomannosidic glycan is involved in the interaction with the mannose receptor. Characterization of O-linked glycan was studied in Bowes melanoma cell line. As to expression, synthesized in numerous tissues (including tumors) and secreted into most extracellular body fluids, such as plasma, uterine fluid, saliva, gingival crevicular fluid, tears, seminal fluid, and milk.

The protein resides in the secreted. It localises to the extracellular space. It carries out the reaction Specific cleavage of Arg-|-Val bond in plasminogen to form plasmin.. Its activity is regulated as follows. Inhibited by SERPINA5. Inhibited by SERPINE1. Functionally, converts the abundant, but inactive, zymogen plasminogen to plasmin by hydrolyzing a single Arg-Val bond in plasminogen. By controlling plasmin-mediated proteolysis, it plays an important role in tissue remodeling and degradation, in cell migration and many other physiopathological events. During oocyte activation, plays a role in cortical granule reaction in the zona reaction, which contributes to the block to polyspermy. The sequence is that of Tissue-type plasminogen activator from Homo sapiens (Human).